A 92-amino-acid chain; its full sequence is MTRSLKKNPFVANHLLEKVEKLNMREEKKIIVTWSRSSTIIPTMIGHTIAIHNGREHLPIYITDRMVGHKLGEFAPTLTFRGHARNDNRSRR.

The protein belongs to the universal ribosomal protein uS19 family.

It localises to the plastid. The protein localises to the chloroplast. In terms of biological role, protein S19 forms a complex with S13 that binds strongly to the 16S ribosomal RNA. This Chloranthus spicatus (Chulantree) protein is Small ribosomal subunit protein uS19c.